The following is a 417-amino-acid chain: NADH-quinone oxidoreductase subunit D (417 aa).

Belongs to the complex I 49 kDa subunit family. NDH-1 is composed of 14 different subunits. Subunits NuoB, C, D, E, F, and G constitute the peripheral sector of the complex.

It is found in the cell inner membrane. It carries out the reaction a quinone + NADH + 5 H(+)(in) = a quinol + NAD(+) + 4 H(+)(out). Its function is as follows. NDH-1 shuttles electrons from NADH, via FMN and iron-sulfur (Fe-S) centers, to quinones in the respiratory chain. The immediate electron acceptor for the enzyme in this species is believed to be ubiquinone. Couples the redox reaction to proton translocation (for every two electrons transferred, four hydrogen ions are translocated across the cytoplasmic membrane), and thus conserves the redox energy in a proton gradient. This chain is NADH-quinone oxidoreductase subunit D, found in Albidiferax ferrireducens (strain ATCC BAA-621 / DSM 15236 / T118) (Rhodoferax ferrireducens).